The primary structure comprises 408 residues: Large ribosomal subunit protein uL4 (408 aa).

The segment at 58–98 is disordered; it reads PYAVSKKAGHQTSAESWGTGRAVSRIPRVPGGGTHRAGQGA.

This sequence belongs to the universal ribosomal protein uL4 family.

The chain is Large ribosomal subunit protein uL4 (RPL4) from Prunus armeniaca (Apricot).